A 210-amino-acid chain; its full sequence is Kalata-B2 (210 aa).

The N-terminal stretch at 1 to 22 (MAKFTNCLVLSLLLAAFVGAFG) is a signal peptide. Positions 23 to 66 (AEFSEADKATLVNDIAENIQKEILGEVKTSETVLTMFLKEMQLK) are excised as a propeptide. The cyclopeptide (Gly-Asp) cross-link spans 67–95 (GLPVCGETCFGGTCNTPGCSCTWPICTRD). 3 disulfide bridges follow: C71–C85, C75–C87, and C80–C92. Positions 96-120 (SLPMRAGGKTSETTLHMFLKEMQLK) are excised as a propeptide. The cyclopeptide (Gly-Asp) cross-link spans 121–149 (GLPVCGETCFGGTCNTPGCSCTWPICTRD). 3 cysteine pairs are disulfide-bonded: C125/C139, C129/C141, and C134/C146. Positions 150-174 (SLPMSAGGKTSETTLHMFLKEMQLK) are excised as a propeptide. The cyclopeptide (Gly-Asp) cross-link spans 175 to 203 (GLPVCGETCFGGTCNTPGCSCTWPICTRD). 3 cysteine pairs are disulfide-bonded: C179–C193, C183–C195, and C188–C200. The propeptide occupies 204-210 (SLPLVAA).

This sequence belongs to the cyclotide family. Moebius subfamily. In terms of processing, kalata-B2 is a cyclic peptide which occurs in three forms: with unmodified Trp, with Trp oxidized to form N-formylkynurenine and with Trp oxidized to form kynurenine. Oxidation is enhanced by exposure to sunlight.

Functionally, probably participates in a plant defense mechanism. Inhibitory effect on the growth and development of larvae from Helicoverpa punctigera. Has hemolytic activity. The sequence is that of Kalata-B2 (OAK4) from Oldenlandia affinis.